A 159-amino-acid chain; its full sequence is Ribosomal RNA large subunit methyltransferase H (159 aa).

S-adenosyl-L-methionine contacts are provided by residues leucine 76, glycine 108, and 127-132 (FSKMTF).

This sequence belongs to the RNA methyltransferase RlmH family. As to quaternary structure, homodimer.

The protein localises to the cytoplasm. It catalyses the reaction pseudouridine(1915) in 23S rRNA + S-adenosyl-L-methionine = N(3)-methylpseudouridine(1915) in 23S rRNA + S-adenosyl-L-homocysteine + H(+). Specifically methylates the pseudouridine at position 1915 (m3Psi1915) in 23S rRNA. The chain is Ribosomal RNA large subunit methyltransferase H from Oceanobacillus iheyensis (strain DSM 14371 / CIP 107618 / JCM 11309 / KCTC 3954 / HTE831).